The chain runs to 581 residues: MKSHIQSLLEQTIESFKQQGILPADFEARIQVDRTKDKSHGDLATNLAMMLTKAAGKNPRELAQLIIDNLPASAYVAKVEIAGPGFINFFIDDSALANQLQAAISDEHLGIKLPTPQTIVVDYSSPNLAKEMHVGHLRSTIIGDSVVRTLEFLGHKVIRQNHVGDWGTQFGMLLAYMEELRAQNGEQAQLELSDLETFYRAAKLRFDESAEFATRARQLVVELQSGDEYCNKLWREFNDISLSHCHEVYERLGVSLTRADVHGESAYNADLEQVVKDLDAQGLLTQSNGAKVVFQEEFRNKEGEALPVIIQKADGGYLYATTDLAAMRYRSSVLKADRVLYFVDLRQALHFQQVFSLAKLAKFVRNDMSLEHLGFGTMNGEDGRPFKTRTGGVVKLVDLLDEANTRALELVRSKNPDMDEATLAEIARVVGISAVKYADLSKNRTSDYIFSFEQMLSFEGNTAPYLLYAYTRVAGIFKRATDIDLSQAKIVLEHEKEKDLGNKLAQFGEILSRVIDKGQPHVLCGYLYELAGAFSSFYEACPVLAADNDEQKHSRLLLSQLTANTLQKGLNLLGIETLERM.

Positions 126-136 (PNLAKEMHVGH) match the 'HIGH' region motif.

The protein belongs to the class-I aminoacyl-tRNA synthetase family. As to quaternary structure, monomer.

Its subcellular location is the cytoplasm. The enzyme catalyses tRNA(Arg) + L-arginine + ATP = L-arginyl-tRNA(Arg) + AMP + diphosphate. The protein is Arginine--tRNA ligase of Shewanella sp. (strain MR-4).